A 285-amino-acid polypeptide reads, in one-letter code: Pantothenate synthetase (285 aa).

Residue 30–37 (MGYLHEGH) participates in ATP binding. Catalysis depends on His-37, which acts as the Proton donor. Gln-61 lines the (R)-pantoate pocket. A beta-alanine-binding site is contributed by Gln-61. An ATP-binding site is contributed by 148–151 (GKKD). Gln-154 serves as a coordination point for (R)-pantoate. ATP-binding positions include Ile-177 and 185–188 (LSSR).

The protein belongs to the pantothenate synthetase family. In terms of assembly, homodimer.

It is found in the cytoplasm. The enzyme catalyses (R)-pantoate + beta-alanine + ATP = (R)-pantothenate + AMP + diphosphate + H(+). It participates in cofactor biosynthesis; (R)-pantothenate biosynthesis; (R)-pantothenate from (R)-pantoate and beta-alanine: step 1/1. Catalyzes the condensation of pantoate with beta-alanine in an ATP-dependent reaction via a pantoyl-adenylate intermediate. This is Pantothenate synthetase from Leptospira borgpetersenii serovar Hardjo-bovis (strain JB197).